The sequence spans 78 residues: MSNIEQQVKKIVAEQLGVNEADVKNESSFQDDLGADSLDTVELVMALEEAFGCEIPDEDAEKITTVQLAIDYINAHNG.

The 76-residue stretch at 2 to 77 (SNIEQQVKKI…LAIDYINAHN (76 aa)) folds into the Carrier domain. Residue Ser37 is modified to O-(pantetheine 4'-phosphoryl)serine.

Belongs to the acyl carrier protein (ACP) family. 4'-phosphopantetheine is transferred from CoA to a specific serine of apo-ACP by AcpS. This modification is essential for activity because fatty acids are bound in thioester linkage to the sulfhydryl of the prosthetic group.

It is found in the cytoplasm. It functions in the pathway lipid metabolism; fatty acid biosynthesis. Carrier of the growing fatty acid chain in fatty acid biosynthesis. The chain is Acyl carrier protein from Neisseria meningitidis serogroup C / serotype 2a (strain ATCC 700532 / DSM 15464 / FAM18).